A 262-amino-acid chain; its full sequence is Acyl-[acyl-carrier-protein]--UDP-N-acetylglucosamine O-acyltransferase (262 aa).

It belongs to the transferase hexapeptide repeat family. LpxA subfamily. Homotrimer.

It localises to the cytoplasm. The enzyme catalyses a (3R)-hydroxyacyl-[ACP] + UDP-N-acetyl-alpha-D-glucosamine = a UDP-3-O-[(3R)-3-hydroxyacyl]-N-acetyl-alpha-D-glucosamine + holo-[ACP]. It participates in glycolipid biosynthesis; lipid IV(A) biosynthesis; lipid IV(A) from (3R)-3-hydroxytetradecanoyl-[acyl-carrier-protein] and UDP-N-acetyl-alpha-D-glucosamine: step 1/6. Functionally, involved in the biosynthesis of lipid A, a phosphorylated glycolipid that anchors the lipopolysaccharide to the outer membrane of the cell. This Verminephrobacter eiseniae (strain EF01-2) protein is Acyl-[acyl-carrier-protein]--UDP-N-acetylglucosamine O-acyltransferase.